A 383-amino-acid polypeptide reads, in one-letter code: Na(+)/H(+) antiporter NhaA (383 aa).

Transmembrane regions (helical) follow at residues 10–30 (LIGG…NNSP), 56–76 (LMHW…GLEI), 91–111 (IITP…IYLS), 121–141 (GWAI…ALLG), 150–170 (LLVI…IAIF), 174–194 (SLSL…IICN), 206–226 (VVLG…ATLA), 254–274 (PWII…ISFS), 289–308 (IIWG…LAVF), 327–347 (GISL…VLAF), and 355–375 (AIKI…YIVL).

Belongs to the NhaA Na(+)/H(+) (TC 2.A.33) antiporter family.

Its subcellular location is the cell inner membrane. The catalysed reaction is Na(+)(in) + 2 H(+)(out) = Na(+)(out) + 2 H(+)(in). Functionally, na(+)/H(+) antiporter that extrudes sodium in exchange for external protons. The chain is Na(+)/H(+) antiporter NhaA from Francisella tularensis subsp. mediasiatica (strain FSC147).